A 119-amino-acid polypeptide reads, in one-letter code: Holo-[acyl-carrier-protein] synthase (119 aa).

Aspartate 8 and glutamate 60 together coordinate Mg(2+).

The protein belongs to the P-Pant transferase superfamily. AcpS family. It depends on Mg(2+) as a cofactor.

It localises to the cytoplasm. The enzyme catalyses apo-[ACP] + CoA = holo-[ACP] + adenosine 3',5'-bisphosphate + H(+). Its function is as follows. Transfers the 4'-phosphopantetheine moiety from coenzyme A to a Ser of acyl-carrier-protein. In Staphylococcus haemolyticus (strain JCSC1435), this protein is Holo-[acyl-carrier-protein] synthase.